An 845-amino-acid chain; its full sequence is Taste receptor type 1 member 3 (845 aa).

Residues 1 to 18 form the signal peptide; sequence MAGLMLLSLMALLGLGAG. At 19–568 the chain is on the extracellular side; that stretch reads APLCLSRQLR…FLAWGQPAVL (550 aa). 2 N-linked (GlcNAc...) asparagine glycosylation sites follow: N128 and N262. Residues 569–589 traverse the membrane as a helical segment; sequence VLLILLALALGLVLVALGLFI. At 590–601 the chain is on the cytoplasmic side; sequence RHRDSPLVQASG. Residues 602-622 traverse the membrane as a helical segment; that stretch reads GPRACFGLACLGLVCLSVLLF. Residues 623–637 lie on the Extracellular side of the membrane; that stretch reads PGQPGPASCLAQQPL. Residues 638–658 traverse the membrane as a helical segment; sequence LHLPLTGCLSTLFLQAAQIFV. The Cytoplasmic portion of the chain corresponds to 659–680; it reads GSELPSSWADQLRRCLQGPWAW. Residues 681–701 form a helical membrane-spanning segment; it reads LLVLLALLAEAALCAWYLVAF. Residues 702–727 are Extracellular-facing; that stretch reads PPEVVTDWWVLPTQVLVHCRMRSWIS. Residues 728-748 form a helical membrane-spanning segment; it reads FGLLHAINAMLAFLCFLGTFL. Over 749–760 the chain is Cytoplasmic; the sequence is VQSRPGRYNGAR. Residues 761–781 form a helical membrane-spanning segment; it reads GLTFAMLAYFITWISFVPLFA. Over 782–789 the chain is Extracellular; the sequence is NVHVAYQP. The helical transmembrane segment at 790–810 threads the bilayer; sequence TVQMAAILLCALGILATFHLP. The Cytoplasmic segment spans residues 811 to 845; sequence KCYLLLQQLELNNPEFFLGDDARGQGSSGSGGKET.

It belongs to the G-protein coupled receptor 3 family. TAS1R subfamily. As to quaternary structure, forms homodimers or heterodimers with TAS1R1 and TAS1R2.

It localises to the cell membrane. Putative taste receptor. TAS1R1/TAS1R3 responds to the umami taste stimulus (the taste of monosodium glutamate). TAS1R2/TAS1R3 recognizes diverse natural and synthetic sweeteners. TAS1R3 is essential for the recognition and response to the disaccharide trehalose. Sequence differences within and between species can significantly influence the selectivity and specificity of taste responses. The protein is Taste receptor type 1 member 3 (TAS1R3) of Canis lupus familiaris (Dog).